The sequence spans 662 residues: UvrABC system protein B (662 aa).

In terms of domain architecture, Helicase ATP-binding spans 31–188 (DNIEGGEKAQ…NDLVDIQFER (158 aa)). Residue 44–51 (GATGTGKT) coordinates ATP. Residues 97–120 (YYDYYQPEAYVPSSDTYIEKDSSV) carry the Beta-hairpin motif. The Helicase C-terminal domain occupies 435-601 (QIDDLLGEIN…TIKKEIRDLI (167 aa)). In terms of domain architecture, UVR spans 626-661 (KELVKKLEKQMQEAVEVLDFELAAQIRDMMLEVKAL).

The protein belongs to the UvrB family. In terms of assembly, forms a heterotetramer with UvrA during the search for lesions. Interacts with UvrC in an incision complex.

Its subcellular location is the cytoplasm. In terms of biological role, the UvrABC repair system catalyzes the recognition and processing of DNA lesions. A damage recognition complex composed of 2 UvrA and 2 UvrB subunits scans DNA for abnormalities. Upon binding of the UvrA(2)B(2) complex to a putative damaged site, the DNA wraps around one UvrB monomer. DNA wrap is dependent on ATP binding by UvrB and probably causes local melting of the DNA helix, facilitating insertion of UvrB beta-hairpin between the DNA strands. Then UvrB probes one DNA strand for the presence of a lesion. If a lesion is found the UvrA subunits dissociate and the UvrB-DNA preincision complex is formed. This complex is subsequently bound by UvrC and the second UvrB is released. If no lesion is found, the DNA wraps around the other UvrB subunit that will check the other stand for damage. This is UvrABC system protein B from Streptococcus pneumoniae serotype 2 (strain D39 / NCTC 7466).